The primary structure comprises 252 residues: Short chain dehydrogenase andC (252 aa).

The N-terminal stretch at 1 to 25 is a signal peptide; sequence MGFLQDKVVIITGAAAGIGLATATA. Positions 11, 57, and 119 each coordinate NADP(+). The active-site Proton donor is the serine 137. NADP(+) is bound by residues tyrosine 151 and lysine 155. Tyrosine 151 serves as the catalytic Proton acceptor. Catalysis depends on lysine 155, which acts as the Lowers pKa of active site Tyr.

This sequence belongs to the short-chain dehydrogenases/reductases (SDR) family.

Its pathway is secondary metabolite biosynthesis; terpenoid biosynthesis. Functionally, short chain dehydrogenase; part of the gene cluster that mediates the biosynthesis of anditomin, a fungal meroterpenoid. The first step of the pathway is the synthesis of 3,5-dimethylorsellinic acid (DMOA) by the polyketide synthase andM. DMOA is then converted to the phthalide compound 5,7-dihydroxy-4,6-dimethylphthalide (DHDMP) by the cytochrome P450 monooxygenase andK, which is further prenylated by the prenyltransferase andD to yield farnesyl-DHDMP. Further epoxidation by the FAD-dependent monooxygenase andE leads to epoxyfarnesyl-DHDMP. The next step involves the terpene cyclase andB that converts epoxyfarnesyl-DHDMP into preandiloid A through opening of the epoxide ring followed by the cyclization of the farnesyl moiety. Preandiloid A is in turn oxidized at the C-3 hydroxyl group to yield preandiloid B by the dehydrogenase andC. The dioxygenase andA is solely responsible for the dehydrogenation of preandiloid B leading to the enone preandiloid C, as well as for the intriguing structural rearrangement to generate the bicyclo[2.2.2]octane core, transforming preandiloid C into andiconin. FAD-binding monooxygenase andJ then produces andilesin D which is reduced by dehydrogenase andI to yield andilesin A. Action of acetyltransferase andG followed by a spontaneous acetate elimination leads then to andilesin B, which is in turn substrate of the short chain dehydrogenase andH to yield andilesin C. Finally, the dioxygenase andF catalyzes the transformation of andilesin C to anditomin. This is Short chain dehydrogenase andC from Emericella variicolor (Aspergillus stellatus).